A 385-amino-acid polypeptide reads, in one-letter code: Protein pelota homolog (385 aa).

The protein belongs to the eukaryotic release factor 1 family. Pelota subfamily. In terms of assembly, component of the Pelota-HBS1L complex, also named Dom34-Hbs1 complex, composed of PELO and HBS1L. A divalent metal cation is required as a cofactor.

Its subcellular location is the cytoplasm. In terms of biological role, component of the Pelota-HBS1L complex, a complex that recognizes stalled ribosomes and triggers the No-Go Decay (NGD) pathway. In the Pelota-HBS1L complex, PELO recognizes ribosomes stalled at the 3' end of an mRNA and engages stalled ribosomes by destabilizing mRNA in the mRNA channel. Following mRNA extraction from stalled ribosomes by the SKI complex, the Pelota-HBS1L complex promotes recruitment of ABCE1, which drives the disassembly of stalled ribosomes, followed by degradation of damaged mRNAs as part of the NGD pathway. This is Protein pelota homolog (pelo) from Danio rerio (Zebrafish).